A 433-amino-acid chain; its full sequence is N-lysine methyltransferase SMYD2 (433 aa).

The SET domain occupies 7-241 (GGLERFCSAG…PGDEVFTSYI (235 aa)). An S-adenosyl-L-methionine-binding site is contributed by 17-19 (KGR). Positions 52, 55, 65, 68, 74, 78, 86, and 90 each coordinate Zn(2+). The segment at 52 to 90 (CECCFARKEGLSKCGRCKQAFYCDVECQKEDWPLHKLEC) adopts an MYND-type zinc-finger fold. S-adenosyl-L-methionine-binding positions include H137, 206-207 (NH), and 258-260 (YFF). The residue at position 283 (S283) is a Phosphoserine.

The protein belongs to the class V-like SAM-binding methyltransferase superfamily. Interacts (via MYND-type zinc finger) with EPB41L3. Interacts (via SET domain) with p53/TP53. Interacts with RB1 and HSP90AA1. Interacts with RNA polymerase II and HELZ. Interacts with SIN3A and HDAC1. In terms of tissue distribution, highly expressed in heart, skeletal muscle and brain tissue. During cardiac development, it is differentially expressed with highest expression in the neonatal heart while very low expression is detected at 12.5 dpc and adult. Specifically expressed in cardiomyocytes (at protein level).

The protein resides in the cytoplasm. The protein localises to the cytosol. Its subcellular location is the nucleus. The catalysed reaction is L-lysyl(4)-[histone H3] + 3 S-adenosyl-L-methionine = N(6),N(6),N(6)-trimethyl-L-lysyl(4)-[histone H3] + 3 S-adenosyl-L-homocysteine + 3 H(+). It catalyses the reaction L-lysyl-[protein] + S-adenosyl-L-methionine = N(6)-methyl-L-lysyl-[protein] + S-adenosyl-L-homocysteine + H(+). In terms of biological role, protein-lysine N-methyltransferase that methylates both histones and non-histone proteins, including p53/TP53 and RB1. Specifically trimethylates histone H3 'Lys-4' (H3K4me3) in vivo. The activity requires interaction with HSP90alpha. Shows even higher methyltransferase activity on p53/TP53. Monomethylates 'Lys-370' of p53/TP53, leading to decreased DNA-binding activity and subsequent transcriptional regulation activity of p53/TP53. Monomethylates RB1 at 'Lys-860'. This is N-lysine methyltransferase SMYD2 (Smyd2) from Mus musculus (Mouse).